The sequence spans 398 residues: Putative isocitrate lyase subunit B (398 aa).

Belongs to the isocitrate lyase/PEP mutase superfamily. Isocitrate lyase family. The cofactor is Mg(2+).

It catalyses the reaction D-threo-isocitrate = glyoxylate + succinate. Functionally, together with AceAa, they could catalyze the formation of succinate and glyoxylate from isocitrate. This is Putative isocitrate lyase subunit B (aceAb) from Mycobacterium tuberculosis (strain ATCC 25618 / H37Rv).